A 617-amino-acid chain; its full sequence is V-type proton ATPase catalytic subunit A (617 aa).

250 to 257 (GAFGCGKT) serves as a coordination point for ATP.

It belongs to the ATPase alpha/beta chains family. V-ATPase is a heteromultimeric enzyme made up of two complexes: the ATP-hydrolytic V1 complex and the proton translocation V0 complex. The V1 complex consists of three catalytic AB heterodimers that form a heterohexamer, three peripheral stalks each consisting of EG heterodimers, one central rotor including subunits D and F, and the regulatory subunits C and H. The proton translocation complex V0 consists of the proton transport subunit a, a ring of proteolipid subunits c9c'', rotary subunit d, subunits e and f, and the accessory subunits VhaAC45 and ATP6AP2.

It catalyses the reaction ATP + H2O + 4 H(+)(in) = ADP + phosphate + 5 H(+)(out). Its activity is regulated as follows. ATP hydrolysis occurs at the interface between the nucleotide-binding domains of subunits A and B. ATP hydrolysis triggers a conformational change in the subunits D and F, which induces a shift of subunit d. The c-ring is subsequently rotated and results in a continuous proton translocation across the membrane. Its function is as follows. Catalytic subunit of the V1 complex of vacuolar(H+)-ATPase (V-ATPase), a multisubunit enzyme composed of a peripheral complex (V1) that hydrolyzes ATP and a membrane integral complex (V0) that translocates protons. V-ATPase is responsible for acidifying and maintaining the pH of intracellular compartments and in some cell types, is targeted to the plasma membrane, where it is responsible for acidifying the extracellular environment. In Manduca sexta (Tobacco hawkmoth), this protein is V-type proton ATPase catalytic subunit A (VHAA).